A 917-amino-acid chain; its full sequence is MEANQEASLFLVKILEELDSKQNTVSYQDLCKSLCAQFDLSQLAKLRSVLFYTACLDPNFPATLFKDKMKCSVNNQQSKKIMVAADIVTIFNLIQMNGGTAKEKLPMSCHKVRKKEASFESCRSDTEVCSPTVCEPLNCELSERPFSRGYPTRQSSKCRKMDCKECPQFVPASEPNFLLGVSKEVKNRAASLDRLQALSPYSVASPQPCEMQRTYFPMNIENEPMSDQDSLPISQGIKETFISSEEPFVVQSCVQKRNIFKEDFHNLMTVSPSLVGTTNKAEEGHGEPQSQKELHKPPFFNHSFEMPYHNQYLNPVYSPIPDKRRAKHESLDDLQASTYFGPTPVMGTQDTRRCPGRSSKQTPWPAKSWSLNTEEVPDFERSFFNRNPSEEKLRYPNSGSQTPNFSGPDRHPVYLVPKDQQKVLPAGYAVKPNGLKSKEISSPVDLEKHEAVKKFKDKSISCTSGQHSSDTSSVGTQTEQHVLDPPKCKDLCTSGQAKYGDRHAMKQSDDDSEIVSDDISDIFRFLDDMSISGSTGVIQSSCYNSTGSLSQLHKSDCDSSPEHHLAKITNGVSSGKGDKCNRPENVHHSEEELKSSVCKLVLRIGEIERKLESLSGVREEISQVLGKLNKLDQKIQQPEKVNVQIDLNSLTSEAPSDDSASPRVFRAHSGSHGPKLENSPDWCCSDASGSNSESLRVKALKKSLFTRPSSRSLTEENSATESKIASISNSPRDWRTITYTNRMSLNEEEIKDAGPANNKDWHRKSKEADRQYDIPPQHRLPKQPKDGFLVEQVFSPHPYPTSLKGHMKSNPLYTDMRLTELAEVKRGQPSWTIEEYARNSGDKGKLTALDLQTQESLNPNNLEYWMEDIYTPGYDSLLKRKEAEFRRAKVCKIAALITAAACTVILVIVVPICTMKS.

Residues 1 to 892 are Cytoplasmic-facing; sequence MEANQEASLF…AEFRRAKVCK (892 aa). Disordered stretches follow at residues 337 to 367, 388 to 410, 461 to 483, 568 to 588, 652 to 687, 706 to 727, and 746 to 783; these read STYF…WPAK, PSEE…GPDR, SCTS…QHVL, ITNG…NVHH, SEAP…CSDA, TRPS…IASI, and NEEE…LPKQ. Residues 461 to 480 are compositionally biased toward polar residues; the sequence is SCTSGQHSSDTSSVGTQTEQ. Basic and acidic residues predominate over residues 576–588; sequence KGDKCNRPENVHH. Phosphoserine is present on S712. The chain crosses the membrane as a helical span at residues 893 to 913; the sequence is IAALITAAACTVILVIVVPIC. The Extracellular portion of the chain corresponds to 914–917; it reads TMKS.

It belongs to the MINAR family. As to quaternary structure, interacts with NOTCH2; this interaction increases MINAR1 stability. Interacts (via N-terminus) with DEPTOR (via PDZ domain); this interaction may stabilize DEPTOR protein by impairing its ubiquitination. Expressed in brain and in islets of Langerhans.

The protein resides in the cell membrane. Functionally, intrinsically disordered protein which may negatively regulate mTOR signaling pathway by stabilizing the mTOR complex component DEPTOR. Negatively regulates angiogenesis. Negatively regulates cell growth. Negatively regulates neurite outgrowth in hippocampal neurons. This is Major intrinsically disordered Notch2-binding receptor 1 (Minar1) from Mus musculus (Mouse).